Here is a 1071-residue protein sequence, read N- to C-terminus: ATP-dependent helicase/deoxyribonuclease subunit B (1071 aa).

This sequence belongs to the helicase family. AddB/RexB type 2 subfamily. As to quaternary structure, heterodimer of AddA and RexB. Requires Mg(2+) as cofactor.

In terms of biological role, the heterodimer acts as both an ATP-dependent DNA helicase and an ATP-dependent, dual-direction single-stranded exonuclease. Recognizes the chi site generating a DNA molecule suitable for the initiation of homologous recombination. This subunit has 5' -&gt; 3' nuclease activity but not helicase activity. The chain is ATP-dependent helicase/deoxyribonuclease subunit B from Streptococcus pyogenes serotype M4 (strain MGAS10750).